A 118-amino-acid chain; its full sequence is Large ribosomal subunit protein bL20 (118 aa).

Belongs to the bacterial ribosomal protein bL20 family.

Its function is as follows. Binds directly to 23S ribosomal RNA and is necessary for the in vitro assembly process of the 50S ribosomal subunit. It is not involved in the protein synthesizing functions of that subunit. The protein is Large ribosomal subunit protein bL20 of Rhodopirellula baltica (strain DSM 10527 / NCIMB 13988 / SH1).